The primary structure comprises 374 residues: 3-isopropylmalate dehydrogenase (374 aa).

Residue 83–96 (GPKWDNLPPEIRPE) coordinates NAD(+). Substrate-binding residues include R104, R114, R142, and D231. Mg(2+) contacts are provided by D231, D255, and D259. 288–300 (GSAPDIAGQNKAN) contacts NAD(+).

The protein belongs to the isocitrate and isopropylmalate dehydrogenases family. LeuB type 1 subfamily. In terms of assembly, homodimer. Mg(2+) is required as a cofactor. Requires Mn(2+) as cofactor.

The protein localises to the cytoplasm. It catalyses the reaction (2R,3S)-3-isopropylmalate + NAD(+) = 4-methyl-2-oxopentanoate + CO2 + NADH. The protein operates within amino-acid biosynthesis; L-leucine biosynthesis; L-leucine from 3-methyl-2-oxobutanoate: step 3/4. Catalyzes the oxidation of 3-carboxy-2-hydroxy-4-methylpentanoate (3-isopropylmalate) to 3-carboxy-4-methyl-2-oxopentanoate. The product decarboxylates to 4-methyl-2 oxopentanoate. The chain is 3-isopropylmalate dehydrogenase from Carboxydothermus hydrogenoformans (strain ATCC BAA-161 / DSM 6008 / Z-2901).